The sequence spans 175 residues: Crossover junction endodeoxyribonuclease RuvC (175 aa).

Active-site residues include Asp16, Glu76, and Asp148. Mg(2+)-binding residues include Asp16, Glu76, and Asp148.

This sequence belongs to the RuvC family. As to quaternary structure, homodimer which binds Holliday junction (HJ) DNA. The HJ becomes 2-fold symmetrical on binding to RuvC with unstacked arms; it has a different conformation from HJ DNA in complex with RuvA. In the full resolvosome a probable DNA-RuvA(4)-RuvB(12)-RuvC(2) complex forms which resolves the HJ. Requires Mg(2+) as cofactor.

The protein localises to the cytoplasm. The enzyme catalyses Endonucleolytic cleavage at a junction such as a reciprocal single-stranded crossover between two homologous DNA duplexes (Holliday junction).. In terms of biological role, the RuvA-RuvB-RuvC complex processes Holliday junction (HJ) DNA during genetic recombination and DNA repair. Endonuclease that resolves HJ intermediates. Cleaves cruciform DNA by making single-stranded nicks across the HJ at symmetrical positions within the homologous arms, yielding a 5'-phosphate and a 3'-hydroxyl group; requires a central core of homology in the junction. The consensus cleavage sequence is 5'-(A/T)TT(C/G)-3'. Cleavage occurs on the 3'-side of the TT dinucleotide at the point of strand exchange. HJ branch migration catalyzed by RuvA-RuvB allows RuvC to scan DNA until it finds its consensus sequence, where it cleaves and resolves the cruciform DNA. The chain is Crossover junction endodeoxyribonuclease RuvC from Bradyrhizobium sp. (strain BTAi1 / ATCC BAA-1182).